Here is a 316-residue protein sequence, read N- to C-terminus: Aspartate carbamoyltransferase catalytic subunit (316 aa).

Arg-58 and Thr-59 together coordinate carbamoyl phosphate. Lys-86 is an L-aspartate binding site. Arg-108, His-136, and Gln-139 together coordinate carbamoyl phosphate. 2 residues coordinate L-aspartate: Arg-169 and Arg-223. Residues Gly-265 and Pro-266 each coordinate carbamoyl phosphate.

Belongs to the aspartate/ornithine carbamoyltransferase superfamily. ATCase family. In terms of assembly, heterododecamer (2C3:3R2) of six catalytic PyrB chains organized as two trimers (C3), and six regulatory PyrI chains organized as three dimers (R2).

It carries out the reaction carbamoyl phosphate + L-aspartate = N-carbamoyl-L-aspartate + phosphate + H(+). It participates in pyrimidine metabolism; UMP biosynthesis via de novo pathway; (S)-dihydroorotate from bicarbonate: step 2/3. Its function is as follows. Catalyzes the condensation of carbamoyl phosphate and aspartate to form carbamoyl aspartate and inorganic phosphate, the committed step in the de novo pyrimidine nucleotide biosynthesis pathway. The chain is Aspartate carbamoyltransferase catalytic subunit from Anaeromyxobacter sp. (strain Fw109-5).